We begin with the raw amino-acid sequence, 338 residues long: 1-aminocyclopropane-1-carboxylate deaminase (338 aa).

Residue lysine 51 is modified to N6-(pyridoxal phosphate)lysine. Catalysis depends on serine 78, which acts as the Nucleophile.

It belongs to the ACC deaminase/D-cysteine desulfhydrase family. Homotrimer. It depends on pyridoxal 5'-phosphate as a cofactor.

The enzyme catalyses 1-aminocyclopropane-1-carboxylate + H2O = 2-oxobutanoate + NH4(+). In terms of biological role, catalyzes a cyclopropane ring-opening reaction, the irreversible conversion of 1-aminocyclopropane-1-carboxylate (ACC) to ammonia and alpha-ketobutyrate. Allows growth on ACC as a nitrogen source. This is 1-aminocyclopropane-1-carboxylate deaminase from Ralstonia pickettii (strain 12J).